A 470-amino-acid polypeptide reads, in one-letter code: ATP synthase subunit beta (470 aa).

157 to 164 (GGAGVGKT) lines the ATP pocket.

It belongs to the ATPase alpha/beta chains family. In terms of assembly, F-type ATPases have 2 components, CF(1) - the catalytic core - and CF(0) - the membrane proton channel. CF(1) has five subunits: alpha(3), beta(3), gamma(1), delta(1), epsilon(1). CF(0) has three main subunits: a(1), b(2) and c(9-12). The alpha and beta chains form an alternating ring which encloses part of the gamma chain. CF(1) is attached to CF(0) by a central stalk formed by the gamma and epsilon chains, while a peripheral stalk is formed by the delta and b chains.

It localises to the cell inner membrane. The enzyme catalyses ATP + H2O + 4 H(+)(in) = ADP + phosphate + 5 H(+)(out). Its function is as follows. Produces ATP from ADP in the presence of a proton gradient across the membrane. The catalytic sites are hosted primarily by the beta subunits. This is ATP synthase subunit beta from Citrifermentans bemidjiense (strain ATCC BAA-1014 / DSM 16622 / JCM 12645 / Bem) (Geobacter bemidjiensis).